Reading from the N-terminus, the 301-residue chain is tRNA dimethylallyltransferase (301 aa).

2-9 contacts ATP; sequence GPTASGKT. Residue 4–9 participates in substrate binding; sequence TASGKT. Interaction with substrate tRNA stretches follow at residues 27–30 and 151–155; these read DSAM and QRIQR.

Belongs to the IPP transferase family. Monomer. Mg(2+) serves as cofactor.

The enzyme catalyses adenosine(37) in tRNA + dimethylallyl diphosphate = N(6)-dimethylallyladenosine(37) in tRNA + diphosphate. Catalyzes the transfer of a dimethylallyl group onto the adenine at position 37 in tRNAs that read codons beginning with uridine, leading to the formation of N6-(dimethylallyl)adenosine (i(6)A). In Coxiella burnetii (strain CbuK_Q154) (Coxiella burnetii (strain Q154)), this protein is tRNA dimethylallyltransferase.